Here is a 296-residue protein sequence, read N- to C-terminus: Nucleotide-binding protein Rmet_0297 (296 aa).

8-15 (GISGSGKS) contributes to the ATP binding site. 57-60 (DIRS) contributes to the GTP binding site.

It belongs to the RapZ-like family.

In terms of biological role, displays ATPase and GTPase activities. This Cupriavidus metallidurans (strain ATCC 43123 / DSM 2839 / NBRC 102507 / CH34) (Ralstonia metallidurans) protein is Nucleotide-binding protein Rmet_0297.